The primary structure comprises 357 residues: Protein pelota homolog (357 aa).

The protein belongs to the eukaryotic release factor 1 family. Pelota subfamily. Monomer. The cofactor is a divalent metal cation.

Its subcellular location is the cytoplasm. Functionally, may function in recognizing stalled ribosomes, interact with stem-loop structures in stalled mRNA molecules, and effect endonucleolytic cleavage of the mRNA. May play a role in the release non-functional ribosomes and degradation of damaged mRNAs. Has endoribonuclease activity. This chain is Protein pelota homolog, found in Thermococcus onnurineus (strain NA1).